We begin with the raw amino-acid sequence, 529 residues long: Cytochrome P450 monooxygenase okaD (529 aa).

Residues 13–35 (LPAQHLLASLALVGALLSVGYLL) traverse the membrane as a helical segment. Residue Cys-435 participates in heme binding.

It belongs to the cytochrome P450 family. Requires heme as cofactor.

Its subcellular location is the membrane. The enzyme catalyses okaramine C + 2 reduced [NADPH--hemoprotein reductase] + 2 O2 = okaramine A + 2 oxidized [NADPH--hemoprotein reductase] + 4 H2O + 2 H(+). The protein operates within alkaloid biosynthesis. In terms of biological role, cytochrome P450 monooxygenase; part of the gene cluster that mediates the biosynthesis of okaramine B, a prenylated indole alkaloid that possesses an unusual octacyclic ring system, including a four-membered azetidine ring and an eight-membered azocine ring, and that exhibits insecticidal activity against silkworm larvae. Within the pathway, okaD likely catalyzes a key step in forming the eight-membered ring of okaramine A using as substrate okaramine C. The biosynthesis begins with the NRPS okaA that condenses two tryptophan molecules into cyclo(L-Trp-L-Trp). Prenylation by the prenyltransferase okaC then leads to the formation of cyclo(N8-(alpha,alpha-dimethylallyl)-L-Trp-6a-(alpha,alpha-dime-thylallyl)-L-Trp). This is followed by indole 2,3-epoxidation by the FAD-dependent monooxygenase okaB to facilitate the formation of the hexahydropyrrolo[2,3-b]indole (HPI) moiety of okaramine C. The cytochrome P450 monooxygenase okaD then likely catalyzes formation of the eight-membered ring of okaramine A. The dioxygenase okaE further forms the unusual 2-dimethyl-3-methyl-azetidine ring to yield 12-deshydroxyl okaramine E, as well as the hydroxylation of 12-deshydroxyl okaramine E to produce okaramine E. The cytochrome P450 monoxygenase okaG converts 12-deshydroxyl okaramine E into 3-desmethyl okaramine B which is further methylated by the methyltransferase okaF into okaramine B. In a shunt pathway, okaG and okaF together are also able to convert okaramine E into okaramine D. Okaramine H is produced by nonenzymatic conversion from okaramine A. This is Cytochrome P450 monooxygenase okaD from Penicillium ochrochloron.